Reading from the N-terminus, the 469-residue chain is Ribulose bisphosphate carboxylase large chain (469 aa).

Lys7 carries the N6,N6,N6-trimethyllysine modification. Residues Asn116 and Thr166 each coordinate substrate. Lys168 (proton acceptor) is an active-site residue. Lys170 is a substrate binding site. Mg(2+) is bound by residues Lys194, Asp196, and Glu197. Lys194 bears the N6-carboxylysine mark. His287 (proton acceptor) is an active-site residue. Residues Arg288, His320, and Ser372 each coordinate substrate.

The protein belongs to the RuBisCO large chain family. Type I subfamily. In terms of assembly, heterohexadecamer of 8 large chains and 8 small chains; disulfide-linked. The disulfide link is formed within the large subunit homodimers. It depends on Mg(2+) as a cofactor. In terms of processing, the disulfide bond which can form in the large chain dimeric partners within the hexadecamer appears to be associated with oxidative stress and protein turnover.

It localises to the plastid. Its subcellular location is the chloroplast. It catalyses the reaction 2 (2R)-3-phosphoglycerate + 2 H(+) = D-ribulose 1,5-bisphosphate + CO2 + H2O. It carries out the reaction D-ribulose 1,5-bisphosphate + O2 = 2-phosphoglycolate + (2R)-3-phosphoglycerate + 2 H(+). Functionally, ruBisCO catalyzes two reactions: the carboxylation of D-ribulose 1,5-bisphosphate, the primary event in carbon dioxide fixation, as well as the oxidative fragmentation of the pentose substrate in the photorespiration process. Both reactions occur simultaneously and in competition at the same active site. The polypeptide is Ribulose bisphosphate carboxylase large chain (Pachira aquatica (Guiana chestnut)).